Reading from the N-terminus, the 154-residue chain is Ribonuclease H (154 aa).

The RNase H type-1 domain maps to 1-142 (MEKTVEIYTD…VDDLARDAAG (142 aa)). Residues aspartate 10, glutamate 48, aspartate 70, and aspartate 134 each coordinate Mg(2+).

This sequence belongs to the RNase H family. As to quaternary structure, monomer. It depends on Mg(2+) as a cofactor.

It is found in the cytoplasm. It carries out the reaction Endonucleolytic cleavage to 5'-phosphomonoester.. Its function is as follows. Endonuclease that specifically degrades the RNA of RNA-DNA hybrids. In Pseudoalteromonas translucida (strain TAC 125), this protein is Ribonuclease H.